The following is a 787-amino-acid chain: Protocadherin beta-15 (787 aa).

Positions 1–26 are cleaved as a signal peptide; sequence MEPAGERFPEQRQVLILLLLLEVTLA. Residues 27–690 are Extracellular-facing; sequence GWEPRRYSVM…AQADSLTVYL (664 aa). Cadherin domains follow at residues 35-133, 138-242, 247-347, 352-451, and 456-561; these read VMEE…SPEF, MTLK…APEF, YEVQ…FPEL, LTSP…APAF, and YTLF…SPFV. N-linked (GlcNAc...) asparagine glycosylation occurs at asparagine 418. N-linked (GlcNAc...) asparagine glycosylation is present at asparagine 567. Residues 568-671 form the Cadherin 6 domain; sequence GSAPCTELVP…LVDGFSQPYL (104 aa). The chain crosses the membrane as a helical span at residues 691 to 711; the sequence is VVALASVSSLFLFSVFLFVAV. Over 712–787 the chain is Cytoplasmic; that stretch reads RLCRRSRAAS…DSRRKSEFLE (76 aa).

It localises to the cell membrane. Its function is as follows. Potential calcium-dependent cell-adhesion protein. May be involved in the establishment and maintenance of specific neuronal connections in the brain. The polypeptide is Protocadherin beta-15 (PCDHB15) (Homo sapiens (Human)).